Consider the following 416-residue polypeptide: Putative UV-damage repair protein UvrX (416 aa).

A UmuC domain is found at 12–196; that stretch reads ILCVDMKSFY…RPLSKMWGIG (185 aa). Residues Asp-16 and Asp-115 each coordinate Mg(2+). Glu-116 is an active-site residue.

This sequence belongs to the DNA polymerase type-Y family. Mg(2+) is required as a cofactor.

This Bacillus subtilis (strain 168) protein is Putative UV-damage repair protein UvrX (uvrX).